A 269-amino-acid chain; its full sequence is 3'(2'),5'-bisphosphate nucleotidase CysQ (269 aa).

Mg(2+)-binding residues include E69, D89, L91, D92, and D216. E69 contacts substrate. Substrate contacts are provided by residues 91-94 (LDGT) and D216.

The protein belongs to the inositol monophosphatase superfamily. CysQ family. Mg(2+) is required as a cofactor.

It localises to the cell inner membrane. It catalyses the reaction adenosine 3',5'-bisphosphate + H2O = AMP + phosphate. In terms of biological role, converts adenosine-3',5'-bisphosphate (PAP) to AMP. The chain is 3'(2'),5'-bisphosphate nucleotidase CysQ from Haemophilus influenzae (strain ATCC 51907 / DSM 11121 / KW20 / Rd).